We begin with the raw amino-acid sequence, 349 residues long: MKFLDEAKVYIRSGDGGNGCVAFRREKYIEFGGPSGGNGGRGGDVVIEVADGLNTLIDYRYQQHFKAQKGTNGMGKDRHGANGKDIVLKVPRGTQIFDEDRETLLHDFTELGERFVLAEGGNGGFGNAHFKSSTNRAPRNANPGQEGEERWIWLRLKLIADAGLVGLPNAGKSTFLSKVSAAKPKIADYPFTTLHPQLGVVNVDGREFVLADIPGLIEGAHEGAGLGDRFLGHVERCRVLLHLIDATCEHAGKAYKTVRGELDAYAETLSDKVEIVALNKIDAVEPEELKKQRDRLKRAAKKTPLLMSGVTGQGVPEALRALVAVIGEAPVSDKAKAAADVEPWSPLTG.

Residues methionine 1–isoleucine 159 enclose the Obg domain. The 168-residue stretch at alanine 160 to glycine 327 folds into the OBG-type G domain. Residues glycine 166 to serine 173, phenylalanine 191 to histidine 195, aspartate 212 to glycine 215, asparagine 279 to aspartate 282, and serine 308 to valine 310 contribute to the GTP site. Mg(2+) is bound by residues serine 173 and threonine 193.

The protein belongs to the TRAFAC class OBG-HflX-like GTPase superfamily. OBG GTPase family. Monomer. Mg(2+) serves as cofactor.

The protein resides in the cytoplasm. An essential GTPase which binds GTP, GDP and possibly (p)ppGpp with moderate affinity, with high nucleotide exchange rates and a fairly low GTP hydrolysis rate. Plays a role in control of the cell cycle, stress response, ribosome biogenesis and in those bacteria that undergo differentiation, in morphogenesis control. The protein is GTPase Obg of Rhodopseudomonas palustris (strain BisA53).